We begin with the raw amino-acid sequence, 189 residues long: Probable nicotinate-nucleotide adenylyltransferase (189 aa).

The protein belongs to the NadD family.

The enzyme catalyses nicotinate beta-D-ribonucleotide + ATP + H(+) = deamido-NAD(+) + diphosphate. It functions in the pathway cofactor biosynthesis; NAD(+) biosynthesis; deamido-NAD(+) from nicotinate D-ribonucleotide: step 1/1. Functionally, catalyzes the reversible adenylation of nicotinate mononucleotide (NaMN) to nicotinic acid adenine dinucleotide (NaAD). This is Probable nicotinate-nucleotide adenylyltransferase from Bacillus cereus (strain G9842).